Consider the following 265-residue polypeptide: Thiazole synthase (265 aa).

K106 serves as the catalytic Schiff-base intermediate with DXP. Residues G167, 193–194, and 215–216 each bind 1-deoxy-D-xylulose 5-phosphate; these read AG and NS.

The protein belongs to the ThiG family. In terms of assembly, homotetramer. Forms heterodimers with either ThiH or ThiS.

It is found in the cytoplasm. It catalyses the reaction [ThiS sulfur-carrier protein]-C-terminal-Gly-aminoethanethioate + 2-iminoacetate + 1-deoxy-D-xylulose 5-phosphate = [ThiS sulfur-carrier protein]-C-terminal Gly-Gly + 2-[(2R,5Z)-2-carboxy-4-methylthiazol-5(2H)-ylidene]ethyl phosphate + 2 H2O + H(+). Its pathway is cofactor biosynthesis; thiamine diphosphate biosynthesis. Its function is as follows. Catalyzes the rearrangement of 1-deoxy-D-xylulose 5-phosphate (DXP) to produce the thiazole phosphate moiety of thiamine. Sulfur is provided by the thiocarboxylate moiety of the carrier protein ThiS. In vitro, sulfur can be provided by H(2)S. The polypeptide is Thiazole synthase (Prochlorococcus marinus (strain MIT 9515)).